Consider the following 202-residue polypeptide: 3-isopropylmalate dehydratase small subunit (202 aa).

It belongs to the LeuD family. LeuD type 1 subfamily. Heterodimer of LeuC and LeuD.

It carries out the reaction (2R,3S)-3-isopropylmalate = (2S)-2-isopropylmalate. Its pathway is amino-acid biosynthesis; L-leucine biosynthesis; L-leucine from 3-methyl-2-oxobutanoate: step 2/4. Catalyzes the isomerization between 2-isopropylmalate and 3-isopropylmalate, via the formation of 2-isopropylmaleate. The chain is 3-isopropylmalate dehydratase small subunit from Caulobacter vibrioides (strain ATCC 19089 / CIP 103742 / CB 15) (Caulobacter crescentus).